The following is a 303-amino-acid chain: Sulfotransferase 6B1 (303 aa).

3'-phosphoadenylyl sulfate is bound at residue 65-70 (KCGSNW). The active-site Proton acceptor is His-118. 3'-phosphoadenylyl sulfate-binding positions include Arg-140, Ser-148, Tyr-203, 237 to 242 (STFQAM), and 259 to 261 (RKG).

It belongs to the sulfotransferase 1 family.

It localises to the cytoplasm. It is found in the cytosol. It catalyses the reaction thyroxine + 3'-phosphoadenylyl sulfate = thyroxine sulfate + adenosine 3',5'-bisphosphate + H(+). Functionally, sulfotransferase that utilizes 3'-phospho-5'-adenylyl sulfate (PAPS) as sulfonate donor to catalyze the sulfate conjugation of thyroxine. Involved in the metabolism of thyroxine. The polypeptide is Sulfotransferase 6B1 (SULT6B1) (Pan troglodytes (Chimpanzee)).